We begin with the raw amino-acid sequence, 144 residues long: Large ribosomal subunit protein uL11 (144 aa).

It belongs to the universal ribosomal protein uL11 family. In terms of assembly, part of the ribosomal stalk of the 50S ribosomal subunit. Interacts with L10 and the large rRNA to form the base of the stalk. L10 forms an elongated spine to which L12 dimers bind in a sequential fashion forming a multimeric L10(L12)X complex. In terms of processing, one or more lysine residues are methylated.

Its function is as follows. Forms part of the ribosomal stalk which helps the ribosome interact with GTP-bound translation factors. This Neisseria gonorrhoeae (strain ATCC 700825 / FA 1090) protein is Large ribosomal subunit protein uL11.